Consider the following 122-residue polypeptide: uncharacterized protein (122 aa).

Over 1 to 24 (MKNRKFSNLLLLRLRILCFNKKPA) the chain is Cytoplasmic. The chain crosses the membrane as a helical span at residues 25–45 (FAATSYAFFFRNFSVLIFIMV). The Extracellular portion of the chain corresponds to 46–57 (PDEKENGAAADN). The chain crosses the membrane as a helical span at residues 58–78 (SFSLLIGRGVVLFLFYCPTAL). The Cytoplasmic segment spans residues 79-122 (KMHGPVPAHWFCDKNIEAIQSDGQIRLLRSGPFPWSHGTCIRGA).

It localises to the membrane. This is an uncharacterized protein from Saccharomyces cerevisiae (strain ATCC 204508 / S288c) (Baker's yeast).